The primary structure comprises 650 residues: DNA mismatch repair protein MutL (650 aa).

2 disordered regions span residues 358-392 (EASQAALPVTPQPRPALTPGHPDPPPQAQLQQPLV) and 408-448 (QPRP…QSAA). Over residues 367-384 (TPQPRPALTPGHPDPPPQ) the composition is skewed to pro residues. Residues 430–444 (PYAPIAAAPVPASEP) show a composition bias toward low complexity.

This sequence belongs to the DNA mismatch repair MutL/HexB family.

In terms of biological role, this protein is involved in the repair of mismatches in DNA. It is required for dam-dependent methyl-directed DNA mismatch repair. May act as a 'molecular matchmaker', a protein that promotes the formation of a stable complex between two or more DNA-binding proteins in an ATP-dependent manner without itself being part of a final effector complex. This Geobacter sp. (strain M21) protein is DNA mismatch repair protein MutL.